The sequence spans 158 residues: Large ribosomal subunit protein uL23 (158 aa).

Residues 1 to 43 form a disordered region; the sequence is MPPKSSTKAEPKASSAKTQVAKAKSAKKAVVKGTSSKTQRRIR. Low complexity predominate over residues 12-23; the sequence is KASSAKTQVAKA.

Belongs to the universal ribosomal protein uL23 family.

Its function is as follows. This protein binds to a specific region on the 26S rRNA. This chain is Large ribosomal subunit protein uL23, found in Puccinia graminis (Black stem rust fungus).